The chain runs to 492 residues: Protein odr-4 homolog (492 aa).

A disordered region spans residues 251–270 (LQPTSTTGGTATASSNTTDS). The segment covering 254–268 (TSTTGGTATASSNTT) has biased composition (low complexity). The helical transmembrane segment at 469 to 489 (MVGIAVALLVLLSSVALHFVL) threads the bilayer.

This sequence belongs to the ODR-4 family.

It localises to the membrane. Functionally, may play a role in the trafficking of a subset of G-protein coupled receptors. The protein is Protein odr-4 homolog of Drosophila melanogaster (Fruit fly).